Reading from the N-terminus, the 180-residue chain is Cytidylate kinase (180 aa).

7-15 serves as a coordination point for ATP; the sequence is GLPGSGTTT.

The protein belongs to the cytidylate kinase family. Type 2 subfamily.

The protein localises to the cytoplasm. The enzyme catalyses CMP + ATP = CDP + ADP. The catalysed reaction is dCMP + ATP = dCDP + ADP. In Methanosarcina acetivorans (strain ATCC 35395 / DSM 2834 / JCM 12185 / C2A), this protein is Cytidylate kinase.